The chain runs to 201 residues: FMN-dependent NADH:quinone oxidoreductase (201 aa).

Residues Ser10, 16–18 (SQS), 96–99 (MYNF), and 140–143 (SRGG) contribute to the FMN site.

It belongs to the azoreductase type 1 family. In terms of assembly, homodimer. FMN serves as cofactor.

It carries out the reaction 2 a quinone + NADH + H(+) = 2 a 1,4-benzosemiquinone + NAD(+). It catalyses the reaction N,N-dimethyl-1,4-phenylenediamine + anthranilate + 2 NAD(+) = 2-(4-dimethylaminophenyl)diazenylbenzoate + 2 NADH + 2 H(+). In terms of biological role, quinone reductase that provides resistance to thiol-specific stress caused by electrophilic quinones. Also exhibits azoreductase activity. Catalyzes the reductive cleavage of the azo bond in aromatic azo compounds to the corresponding amines. The chain is FMN-dependent NADH:quinone oxidoreductase from Escherichia coli O9:H4 (strain HS).